Reading from the N-terminus, the 396-residue chain is Tyrosine--tRNA ligase (396 aa).

The 'HIGH' region motif lies at 39-48; it reads PTAPDLHLGH. The 'KMSKS' region motif lies at 223–227; that stretch reads KMSKS. An ATP-binding site is contributed by Lys-226. The region spanning 334–395 is the S4 RNA-binding domain; that stretch reads LPVPQLLKQA…GKRKFARVTV (62 aa).

It belongs to the class-I aminoacyl-tRNA synthetase family. TyrS type 2 subfamily. As to quaternary structure, homodimer.

It localises to the cytoplasm. It carries out the reaction tRNA(Tyr) + L-tyrosine + ATP = L-tyrosyl-tRNA(Tyr) + AMP + diphosphate + H(+). Catalyzes the attachment of tyrosine to tRNA(Tyr) in a two-step reaction: tyrosine is first activated by ATP to form Tyr-AMP and then transferred to the acceptor end of tRNA(Tyr). This is Tyrosine--tRNA ligase from Thiobacillus denitrificans (strain ATCC 25259 / T1).